The primary structure comprises 170 residues: Large ribosomal subunit protein bL9 (170 aa).

The segment at 149–170 (DGDNEDLDEDNAADENEDYSEE) is disordered.

This sequence belongs to the bacterial ribosomal protein bL9 family.

Functionally, binds to the 23S rRNA. The polypeptide is Large ribosomal subunit protein bL9 (Psychrobacter cryohalolentis (strain ATCC BAA-1226 / DSM 17306 / VKM B-2378 / K5)).